The following is a 635-amino-acid chain: Protein OPG056 (635 aa).

This sequence belongs to the orthopoxvirus OPG056 family. As to quaternary structure, interacts with protein OPG164. Interacts with protein OPG064.

Its subcellular location is the virion membrane. The protein resides in the host endosome. Plays a role in intracellular enveloped virus (IEV) transport to the cell surface through microtubule transport. Together with protein OPG064, forms a complex that interacts with host KLC2 (kinesin light chain isoform 2) to engage the kinesin-1 complex and thereby promote IEV trafficking. This Homo sapiens (Human) protein is Protein OPG056 (OPG056).